A 68-amino-acid chain; its full sequence is Large ribosomal subunit protein uL29 (68 aa).

The protein belongs to the universal ribosomal protein uL29 family.

The polypeptide is Large ribosomal subunit protein uL29 (Wigglesworthia glossinidia brevipalpis).